The following is a 557-amino-acid chain: Predicted GPI-anchored protein 17 (557 aa).

An N-terminal signal peptide occupies residues 1–19 (MKFSTVFTAIFALGTAVSA). N-linked (GlcNAc...) asparagine glycans are attached at residues asparagine 62, asparagine 116, asparagine 284, and asparagine 309. The stretch at 320–355 (LRKREYNDAVEAALRDIQKREEGIDDVEIALRKMKR) forms a coiled coil. Residues asparagine 376, asparagine 471, and asparagine 520 are each glycosylated (N-linked (GlcNAc...) asparagine). A lipid anchor (GPI-anchor amidated asparagine) is attached at asparagine 533. Positions 534 to 557 (AGSSYGPGFYSTIFAVFGLFAMMI) are cleaved as a propeptide — removed in mature form.

In terms of processing, substrate for cleavage by KEX2 in vitro.

It localises to the cell membrane. In terms of biological role, predicted GPI-anchored protein which may have a role during host infection. This is Predicted GPI-anchored protein 17 (PGA17) from Candida albicans (strain SC5314 / ATCC MYA-2876) (Yeast).